Reading from the N-terminus, the 260-residue chain is MTSLKLLKEKAPLVICITNDVVKNFTANGLVALGASPAMSEFPADLEDLLKYAGGLLINIGTLTDENWKLYQAALKIAEKYNVPAVLDPVACGAGEYRKKVADDLINNYKLAAIRGNAGEIASLVGIDVASKGVDSAGVDNIDEIALAANEKFNIPIVVTGEVDAIAVNGEVVMIHNGSAMMPKVIGTGCLLGAVVASFIGLEKGQELKSLKTAVLVYNIAGEIAEKRPNGHLPGTFKVEFINALYEITDEDVKEFKRVK.

Met-39 lines the substrate pocket. Positions 115 and 160 each coordinate ATP. Gly-187 contacts substrate.

The protein belongs to the Thz kinase family. Requires Mg(2+) as cofactor.

The catalysed reaction is 5-(2-hydroxyethyl)-4-methylthiazole + ATP = 4-methyl-5-(2-phosphooxyethyl)-thiazole + ADP + H(+). The protein operates within cofactor biosynthesis; thiamine diphosphate biosynthesis; 4-methyl-5-(2-phosphoethyl)-thiazole from 5-(2-hydroxyethyl)-4-methylthiazole: step 1/1. Functionally, catalyzes the phosphorylation of the hydroxyl group of 4-methyl-5-beta-hydroxyethylthiazole (THZ). In Streptococcus pneumoniae serotype 4 (strain ATCC BAA-334 / TIGR4), this protein is Hydroxyethylthiazole kinase 1.